We begin with the raw amino-acid sequence, 695 residues long: Interleukin-1 receptor accessory protein-like 1 (695 aa).

The N-terminal stretch at 1–24 (MKAPIPHLILLYATFTQSLKVVTK) is a signal peptide. One can recognise an Ig-like C2-type 1 domain in the interval 25–134 (RGSADGCTDW…YCMKVSISLT (110 aa)). Residues 25 to 357 (RGSADGCTDW…LLHKRELMYT (333 aa)) lie on the Extracellular side of the membrane. 2 disulfides stabilise this stretch: Cys31–Cys126 and Cys53–Cys118. 3 N-linked (GlcNAc...) asparagine glycosylation sites follow: Asn63, Asn122, and Asn138. Disulfide bonds link Cys143/Cys185 and Cys164/Cys216. Ig-like C2-type domains follow at residues 143-232 (CYNS…TELT) and 242-350 (PKLL…VLLH). N-linked (GlcNAc...) asparagine glycans are attached at residues Asn213, Asn264, and Asn331. The cysteines at positions 267 and 334 are disulfide-linked. A helical transmembrane segment spans residues 358-378 (VELAGGLGAILLLLICSVTIY). At 379–695 (KCYKIEIMLF…RETSISSVIW (317 aa)) the chain is on the cytoplasmic side. A TIR domain is found at 403 to 558 (KDYDAYLSYT…KFWKRLQYEM (156 aa)). The active site involves Glu490. The tract at residues 548–643 (SKFWKRLQYE…TGTLPLTSIG (96 aa)) is interaction with NCS1. The disordered stretch occupies residues 657 to 679 (NGQRPQTKSNREPNPDEAHTNSA). Basic and acidic residues predominate over residues 665–675 (SNREPNPDEAH).

The protein belongs to the interleukin-1 receptor family. In terms of assembly, homodimer. Interacts (calcium-independent) with NCS1/FREQ. Interacts (via the first immunoglobilin domain) with PTPRD (via the second immunoglobilin domain); this interaction is PTPRD-splicing-dependent and induces pre- and post-synaptic differentiation of neurons and is required for IL1RAPL1-mediated synapse formation. As to expression, detected in total brain extracts, olfactory bulb, hippocampus and striatum (at protein level).

Its subcellular location is the cell membrane. The protein localises to the cytoplasm. The protein resides in the cell projection. It localises to the axon. It is found in the dendrite. It carries out the reaction NAD(+) + H2O = ADP-D-ribose + nicotinamide + H(+). In terms of biological role, may regulate secretion and presynaptic differentiation through inhibition of the activity of N-type voltage-gated calcium channel. May activate the MAP kinase JNK. Plays a role in neurite outgrowth. During dendritic spine formation can bidirectionally induce pre- and post-synaptic differentiation of neurons by trans-synaptically binding to PTPRD. The sequence is that of Interleukin-1 receptor accessory protein-like 1 (Il1rapl1) from Mus musculus (Mouse).